A 119-amino-acid chain; its full sequence is NAD(P)H-quinone oxidoreductase subunit M (119 aa).

This sequence belongs to the complex I NdhM subunit family. As to quaternary structure, NDH-1 can be composed of about 15 different subunits; different subcomplexes with different compositions have been identified which probably have different functions.

The protein localises to the cellular thylakoid membrane. It carries out the reaction a plastoquinone + NADH + (n+1) H(+)(in) = a plastoquinol + NAD(+) + n H(+)(out). It catalyses the reaction a plastoquinone + NADPH + (n+1) H(+)(in) = a plastoquinol + NADP(+) + n H(+)(out). Functionally, NDH-1 shuttles electrons from an unknown electron donor, via FMN and iron-sulfur (Fe-S) centers, to quinones in the respiratory and/or the photosynthetic chain. The immediate electron acceptor for the enzyme in this species is believed to be plastoquinone. Couples the redox reaction to proton translocation, and thus conserves the redox energy in a proton gradient. Cyanobacterial NDH-1 also plays a role in inorganic carbon-concentration. In Crocosphaera subtropica (strain ATCC 51142 / BH68) (Cyanothece sp. (strain ATCC 51142)), this protein is NAD(P)H-quinone oxidoreductase subunit M.